A 358-amino-acid polypeptide reads, in one-letter code: 3-dehydroquinate synthase (358 aa).

Residues 72-77 (GGERVK), 106-110 (GALLD), 130-131 (ST), Lys-143, and Lys-151 each bind NAD(+). Zn(2+)-binding residues include Glu-184, His-245, and His-261.

The protein belongs to the sugar phosphate cyclases superfamily. Dehydroquinate synthase family. Requires NAD(+) as cofactor. Co(2+) serves as cofactor. It depends on Zn(2+) as a cofactor.

It localises to the cytoplasm. The catalysed reaction is 7-phospho-2-dehydro-3-deoxy-D-arabino-heptonate = 3-dehydroquinate + phosphate. It functions in the pathway metabolic intermediate biosynthesis; chorismate biosynthesis; chorismate from D-erythrose 4-phosphate and phosphoenolpyruvate: step 2/7. Its function is as follows. Catalyzes the conversion of 3-deoxy-D-arabino-heptulosonate 7-phosphate (DAHP) to dehydroquinate (DHQ). This is 3-dehydroquinate synthase (aroB) from Aeropyrum pernix (strain ATCC 700893 / DSM 11879 / JCM 9820 / NBRC 100138 / K1).